Consider the following 158-residue polypeptide: Transcriptional repressor NrdR (158 aa).

A zinc finger spans residues cysteine 3–cysteine 34. Residues leucine 49 to serine 139 enclose the ATP-cone domain.

It belongs to the NrdR family. Zn(2+) serves as cofactor.

Functionally, negatively regulates transcription of bacterial ribonucleotide reductase nrd genes and operons by binding to NrdR-boxes. The chain is Transcriptional repressor NrdR from Desulforamulus reducens (strain ATCC BAA-1160 / DSM 100696 / MI-1) (Desulfotomaculum reducens).